The sequence spans 517 residues: ATP synthase subunit alpha (517 aa).

175–182 contributes to the ATP binding site; the sequence is GDRQTGKT.

The protein belongs to the ATPase alpha/beta chains family. As to quaternary structure, F-type ATPases have 2 components, CF(1) - the catalytic core - and CF(0) - the membrane proton channel. CF(1) has five subunits: alpha(3), beta(3), gamma(1), delta(1), epsilon(1). CF(0) has three main subunits: a(1), b(2) and c(9-12). The alpha and beta chains form an alternating ring which encloses part of the gamma chain. CF(1) is attached to CF(0) by a central stalk formed by the gamma and epsilon chains, while a peripheral stalk is formed by the delta and b chains.

It is found in the cell membrane. It carries out the reaction ATP + H2O + 4 H(+)(in) = ADP + phosphate + 5 H(+)(out). In terms of biological role, produces ATP from ADP in the presence of a proton gradient across the membrane. The alpha chain is a regulatory subunit. This is ATP synthase subunit alpha from Herpetosiphon aurantiacus (strain ATCC 23779 / DSM 785 / 114-95).